The following is a 251-amino-acid chain: Cyclohexanol dehydrogenase (251 aa).

Positions 42, 95, 161, 165, 194, and 196 each coordinate NAD(+). Catalysis depends on Tyr-161, which acts as the Proton acceptor.

This sequence belongs to the short-chain dehydrogenases/reductases (SDR) family.

The catalysed reaction is cyclohexanol + NAD(+) = cyclohexanone + NADH + H(+). In terms of biological role, catalyzes the oxidation of cyclohexanol to cyclohexanone. Required for the conversion of cyclohexanol to adipic acid. The polypeptide is Cyclohexanol dehydrogenase (Acinetobacter sp. (strain SE19)).